We begin with the raw amino-acid sequence, 107 residues long: Phosphoribosyl-ATP pyrophosphatase 1 (107 aa).

The protein belongs to the PRA-PH family.

It localises to the cytoplasm. It catalyses the reaction 1-(5-phospho-beta-D-ribosyl)-ATP + H2O = 1-(5-phospho-beta-D-ribosyl)-5'-AMP + diphosphate + H(+). The protein operates within amino-acid biosynthesis; L-histidine biosynthesis; L-histidine from 5-phospho-alpha-D-ribose 1-diphosphate: step 2/9. The protein is Phosphoribosyl-ATP pyrophosphatase 1 (hisE1) of Rhodopseudomonas palustris (strain ATCC BAA-98 / CGA009).